Consider the following 1034-residue polypeptide: Platelet endothelial aggregation receptor 1 (1034 aa).

An N-terminal signal peptide occupies residues 1-18 (MPLCPLLLLALGLRLTGT). Residues 19–754 (LNSNDPNVCT…PTSPVTHNSL (736 aa)) are Extracellular-facing. An EMI domain is found at 23 to 101 (DPNVCTFWES…YYESRGACVP (79 aa)). 3 disulfides stabilise this stretch: cysteine 27-cysteine 89, cysteine 53-cysteine 63, and cysteine 88-cysteine 99. N-linked (GlcNAc...) asparagine glycosylation is present at asparagine 150. EGF-like domains are found at residues 181–215 (YGPACQFDCQCYGASCDPQDGACFCPPGRAGPSCN), 223–258 (DGFFCPRTYPCQNGGVPQGSQGSCSCPPGWMGVICS), 266–301 (HGPNCTQECRCHNGGLCDRFTGQCHCAPGYIGDRCQ), 309–344 (FGQDCAETCDCAPGARCFPANGACLCEHGFTGDRCT), and 398–433 (HGPGCQEHCLCLHGGLCLADSGLCRCAPGYTGPHCA). Disulfide bonds link cysteine 185-cysteine 196, cysteine 189-cysteine 203, cysteine 205-cysteine 214, cysteine 233-cysteine 246, and cysteine 248-cysteine 257. Asparagine 269 carries N-linked (GlcNAc...) asparagine glycosylation. Cystine bridges form between cysteine 270–cysteine 282, cysteine 276–cysteine 289, cysteine 291–cysteine 300, cysteine 313–cysteine 325, cysteine 319–cysteine 332, cysteine 334–cysteine 343, cysteine 402–cysteine 414, cysteine 408–cysteine 421, and cysteine 423–cysteine 432. An N-linked (GlcNAc...) asparagine glycan is attached at asparagine 474. 4 consecutive EGF-like domains span residues 484-519 (WGFNCNASCQCAHDGVCSPQTGACTCTPGWHGAHCQ), 575-605 (SNTCTCKNGGTCVSENGNCVCAPGFRGPSCQ), 613-648 (YGKRCVQCKCNNNHSSCHPSDGTCSCLAGWTGPDCS), and 656-691 (WGLKCSQLCQCHHGGTCHPQDGSCICTPGWTGPNCL). Cystine bridges form between cysteine 488-cysteine 500, cysteine 494-cysteine 507, cysteine 509-cysteine 518, cysteine 578-cysteine 586, cysteine 580-cysteine 593, cysteine 595-cysteine 604, cysteine 617-cysteine 629, cysteine 622-cysteine 636, cysteine 638-cysteine 647, cysteine 660-cysteine 672, cysteine 666-cysteine 679, and cysteine 681-cysteine 690. A helical membrane pass occupies residues 755–775 (GAVIGIAVLGTLVVALIALFI). The Cytoplasmic portion of the chain corresponds to 776–1034 (GYRQWQKGKE…PSPPSRRQDR (259 aa)). Residues 823-883 (TLSQCSPNPP…PHERGASHLD (61 aa)) form a disordered region. The span at 851–883 (RPSRAHGRENHVTLPADWKHRREPHERGASHLD) shows a compositional bias: basic and acidic residues. Position 923 is a phosphotyrosine (tyrosine 923). Residues 925–1034 (TIRDLPSLPG…PSPPSRRQDR (110 aa)) are disordered. Serine 951 carries the post-translational modification Phosphoserine. Polar residues predominate over residues 972-991 (DSGTYEQPSPLSHNEESLGS). Serine 1026 carries the phosphoserine modification.

Belongs to the MEGF family. Interacts with SHC2 upon its aggregation-induced tyrosine phosphorylation. Interacts (via extracellular domain) with SVEP1. In terms of processing, phosphorylated in the intracellular domain on tyrosine residues. Phosphorylated on tyrosine residues by SRC. Tyrosine phosphorylation is detected upon platelet aggregation stimulated by collagen, TRAP and thrombin and platelet-platelet contacts but not after platelet activation. Tyrosine phosphorylation enhanced its association with SHC1 and SHC2. Phosphorylated in the intracellular domain on tyrosine residues. Phosphorylated when in the presence of SVEP1. As to expression, expressed in thymocytes, bone marrow stromal and osteogenic cells (at protein level). Strongly expressed in kidney and heart. Moderately expressed in lung, spleen, thymus, liver, brain, testis, skin and stomach. Expressed in hematopoietic stem progenitor cells.

The protein resides in the cell membrane. It is found in the cell projection. Its subcellular location is the lamellipodium. Required for SVEP1-mediated platelet activation, via its interaction with SVEP1 and subsequent activation of AKT/mTOR signaling. May be involved in the early stages of hematopoiesis. This chain is Platelet endothelial aggregation receptor 1 (Pear1), found in Mus musculus (Mouse).